The following is a 366-amino-acid chain: Peptide chain release factor 2 (366 aa).

Glutamine 251 bears the N5-methylglutamine mark.

It belongs to the prokaryotic/mitochondrial release factor family. Methylated by PrmC. Methylation increases the termination efficiency of RF2.

The protein localises to the cytoplasm. In terms of biological role, peptide chain release factor 2 directs the termination of translation in response to the peptide chain termination codons UGA and UAA. This Listeria innocua serovar 6a (strain ATCC BAA-680 / CLIP 11262) protein is Peptide chain release factor 2 (prfB).